Here is a 482-residue protein sequence, read N- to C-terminus: Alpha-ketoglutarate semialdehyde dehydrogenase (482 aa).

The disordered stretch occupies residues 1-28 (MTDPSKNYVNGEWVTSETGETTEVTNPA). Over residues 11-25 (GEWVTSETGETTEVT) the composition is skewed to low complexity. Cysteine 284 is an active-site residue.

It belongs to the aldehyde dehydrogenase family. Homotetramer.

The catalysed reaction is 2,5-dioxopentanoate + NADP(+) + H2O = 2-oxoglutarate + NADPH + 2 H(+). The protein operates within carbohydrate metabolism; D-xylose degradation. In terms of biological role, alpha-ketoglutarate semialdehyde dehydrogenase involved in the degradation of D-xylose, a major component of hemicelluloses such as xylan. Catalyzes the fifth reaction in the xylose utilization pathway through dehydratation of alpha-ketoglutarate semialdehyde (2,5-dioxopentanoate) into alpha-ketoglutarate. In Haloferax volcanii (strain ATCC 29605 / DSM 3757 / JCM 8879 / NBRC 14742 / NCIMB 2012 / VKM B-1768 / DS2) (Halobacterium volcanii), this protein is Alpha-ketoglutarate semialdehyde dehydrogenase.